The following is a 344-amino-acid chain: tRNA N6-adenosine threonylcarbamoyltransferase (344 aa).

Fe cation contacts are provided by His111 and His115. Substrate is bound by residues 133–137, Asp166, Gly179, and Asn283; that span reads LVSGG. Residue Asp311 participates in Fe cation binding.

This sequence belongs to the KAE1 / TsaD family. It depends on Fe(2+) as a cofactor.

The protein localises to the cytoplasm. It carries out the reaction L-threonylcarbamoyladenylate + adenosine(37) in tRNA = N(6)-L-threonylcarbamoyladenosine(37) in tRNA + AMP + H(+). Functionally, required for the formation of a threonylcarbamoyl group on adenosine at position 37 (t(6)A37) in tRNAs that read codons beginning with adenine. Is involved in the transfer of the threonylcarbamoyl moiety of threonylcarbamoyl-AMP (TC-AMP) to the N6 group of A37, together with TsaE and TsaB. TsaD likely plays a direct catalytic role in this reaction. The chain is tRNA N6-adenosine threonylcarbamoyltransferase from Orientia tsutsugamushi (strain Ikeda) (Rickettsia tsutsugamushi).